We begin with the raw amino-acid sequence, 819 residues long: Zinc finger protein 27 (819 aa).

In terms of domain architecture, KRAB spans 1–75; the sequence is MDVTIDFSRE…KTLGAESCHD (75 aa). The interval 93–123 is disordered; the sequence is PKRPRHWDPPEDEPKHSSDLQTHDESNGLKR. Positions 98-120 are enriched in basic and acidic residues; that stretch reads HWDPPEDEPKHSSDLQTHDESNG. 21 consecutive C2H2-type zinc fingers follow at residues 205–227, 233–255, 261–283, 289–311, 317–339, 345–367, 401–423, 429–451, 457–479, 485–507, 513–535, 541–563, 569–591, 597–619, 625–647, 653–675, 681–703, 709–731, 737–759, 765–787, and 793–815; these read YVCV…QKTH, YKCG…RRIH, YDCS…QKIH, HGCV…QKIH, YVCI…RRIH, YACD…QRIH, SICA…QRTH, YQCG…RRIH, YVCV…QVIH, YQCG…KRIH, YVCS…QKTH, YVCA…QRIH, YGCS…EKIH, YGCR…QKIH, HVCA…QRIH, YGCT…RPIH, YVCA…QKTH, YACS…HRIH, YDCG…QRIH, YRCA…QTTH, and YKCV…ENVH.

The protein belongs to the krueppel C2H2-type zinc-finger protein family.

It localises to the nucleus. May be involved in transcriptional regulation. The sequence is that of Zinc finger protein 27 (Zfp27) from Mus musculus (Mouse).